Here is a 281-residue protein sequence, read N- to C-terminus: Shikimate dehydrogenase (NADP(+)) (281 aa).

Residues 15–17 (SKS) and Thr-62 contribute to the shikimate site. Lys-66 serves as the catalytic Proton acceptor. Shikimate is bound by residues Asn-87 and Asp-102. NADP(+)-binding positions include 127–131 (GAGGS), 151–156 (NRTPER), and Leu-217. Tyr-219 contacts shikimate. NADP(+) is bound at residue Gly-241.

The protein belongs to the shikimate dehydrogenase family. Homodimer.

The catalysed reaction is shikimate + NADP(+) = 3-dehydroshikimate + NADPH + H(+). Its pathway is metabolic intermediate biosynthesis; chorismate biosynthesis; chorismate from D-erythrose 4-phosphate and phosphoenolpyruvate: step 4/7. Involved in the biosynthesis of the chorismate, which leads to the biosynthesis of aromatic amino acids. Catalyzes the reversible NADPH linked reduction of 3-dehydroshikimate (DHSA) to yield shikimate (SA). The polypeptide is Shikimate dehydrogenase (NADP(+)) (Stenotrophomonas maltophilia (strain K279a)).